A 1112-amino-acid chain; its full sequence is Mediator of RNA polymerase II transcription subunit 14 (1112 aa).

This sequence belongs to the Mediator complex subunit 14 family. In terms of assembly, component of the Mediator complex.

It localises to the nucleus. In terms of biological role, component of the Mediator complex, a coactivator involved in the regulated transcription of nearly all RNA polymerase II-dependent genes. Mediator functions as a bridge to convey information from gene-specific regulatory proteins to the basal RNA polymerase II transcription machinery. Mediator is recruited to promoters by direct interactions with regulatory proteins and serves as a scaffold for the assembly of a functional preinitiation complex with RNA polymerase II and the general transcription factors. The protein is Mediator of RNA polymerase II transcription subunit 14 (RGR1) of Scheffersomyces stipitis (strain ATCC 58785 / CBS 6054 / NBRC 10063 / NRRL Y-11545) (Yeast).